The following is a 260-amino-acid chain: Uroplakin-1b (260 aa).

The Cytoplasmic segment spans residues 1-12 (MAKDDSSVRCFQ). A helical membrane pass occupies residues 13 to 38 (GLLIFGNVIVGMCGIALTAECIFFVS). The Extracellular portion of the chain corresponds to 39 to 60 (DQHSLYPLLEATDNDDIYGAAW). The helical transmembrane segment at 61–81 (IGMFVGICLFCLSVLGIVGIM) threads the bilayer. The Cytoplasmic portion of the chain corresponds to 82 to 86 (KSNRK). A helical membrane pass occupies residues 87–107 (ILLAYFILMFIVYGFEVASCI). The Extracellular portion of the chain corresponds to 108–229 (TAATQRDFFT…ELISGPMNRH (122 aa)). The chain crosses the membrane as a helical span at residues 230–250 (AWGVAWFGFAILCWTFWVLLG). The Cytoplasmic portion of the chain corresponds to 251–260 (TMFYWSRIEY).

This sequence belongs to the tetraspanin (TM4SF) family. Heterodimer with uroplakin-3A (UPK3A) or uroplakin-3B (UPK3B).

The protein localises to the membrane. In terms of biological role, component of the asymmetric unit membrane (AUM); a highly specialized biomembrane elaborated by terminally differentiated urothelial cells. The protein is Uroplakin-1b (UPK1B) of Neovison vison (American mink).